The primary structure comprises 418 residues: MAFIVAMGMILMAGICPAVLCFPDGTKEMDIVFHEHQDNGTQDDSLTLASVNTDFAFSLYKKLALKNPDTNIVFSPLSISAALALVSLGAKGKTMEEILEGLKFNLTETPEADIHQGFGNLLQSLSQPEDQDQINIGNAMFIEKDLQILAEFHEKTRALYQTEAFTADFQQPTEAKNLINDYVSNQTQGMIKELISELDERTLMVLVNYIYFKGKWKISFDPQDTFESEFYLDEKRSVKVPMMKMKLLTTRHFRDEELSCSVLELKYTGNASALLILPDQGRMQQVEASLQPETLRKWRKTLFPSQIEELNLPKFSIASNYRLEEDVLPEMGIKEVFTEQADLSGITETKKLSVSQVVHKAVLDVAETGTEAAAATGVIGGIRKAILPAVHFNRPFLFVIYHTSAQSILFMAKVNNPK.

The first 21 residues, 1-21 (MAFIVAMGMILMAGICPAVLC), serve as a signal peptide directing secretion. Residues asparagine 39, asparagine 105, asparagine 185, and asparagine 270 are each glycosylated (N-linked (GlcNAc...) asparagine). Residues 369-394 (GTEAAAATGVIGGIRKAILPAVHFNR) form an RCL region.

It belongs to the serpin family. In terms of tissue distribution, expressed in liver and secreted in plasma.

It localises to the secreted. In terms of biological role, contrapsin inhibits trypsin-like proteases. The chain is Serine protease inhibitor A3K (Serpina3k) from Mus musculus (Mouse).